We begin with the raw amino-acid sequence, 183 residues long: Inosine/xanthosine triphosphatase (183 aa).

Position 75 (D75) interacts with Mg(2+). Residue 75–76 (DG) participates in substrate binding.

This sequence belongs to the YjjX NTPase family. Homodimer. Mg(2+) serves as cofactor. Requires Mn(2+) as cofactor.

It carries out the reaction XTP + H2O = XDP + phosphate + H(+). The enzyme catalyses ITP + H2O = IDP + phosphate + H(+). Phosphatase that hydrolyzes non-canonical purine nucleotides such as XTP and ITP to their respective diphosphate derivatives. Probably excludes non-canonical purines from DNA/RNA precursor pool, thus preventing their incorporation into DNA/RNA and avoiding chromosomal lesions. This Vibrio vulnificus (strain YJ016) protein is Inosine/xanthosine triphosphatase.